Here is a 604-residue protein sequence, read N- to C-terminus: Matrix metalloproteinase-21 (604 aa).

The N-terminal stretch at 1 to 22 is a signal peptide; that stretch reads MPSIKLLVWCCLCVISPRLCHS. Positions 23 to 180 are excised as a propeptide; that stretch reads EKLFHSRDRS…PDPPKIRRKR (158 aa). Residues 132–175 are disordered; that stretch reads KPRCGVPDNQMAKKETEKPTAAQSLENKTKDSENVTQQNPDPPK. A Cysteine switch motif is present at residues 133–140; the sequence is PRCGVPDN. Cysteine 135 lines the Zn(2+) pocket. N-linked (GlcNAc...) asparagine glycans are attached at residues asparagine 158 and asparagine 165. Histidine 318 is a binding site for Zn(2+). The active site involves glutamate 319. Positions 322 and 328 each coordinate Zn(2+). Cysteine 364 and cysteine 595 form a disulfide bridge. 4 Hemopexin repeats span residues 365–424, 426–482, 483–531, and 538–594; these read EGPF…WHGI, VQNI…FPGI, PSPI…FPAV, and KGNI…WFDI. N-linked (GlcNAc...) asparagine glycans are attached at residues asparagine 404 and asparagine 407.

Belongs to the peptidase M10A family. It depends on Zn(2+) as a cofactor. The cofactor is Ca(2+). The precursor is cleaved by a furin endopeptidase.

The protein resides in the secreted. In terms of biological role, plays a specialized role in the generation of left-right asymmetry during embryogenesis. May act as a negative regulator of the NOTCH-signaling pathway. This Xenopus laevis (African clawed frog) protein is Matrix metalloproteinase-21 (mmp21).